The following is a 122-amino-acid chain: Fluoride-specific ion channel FluC (122 aa).

The next 4 helical transmembrane spans lie at 4-24 (LLIALGGGTGSLARYLLGTAI), 34-54 (IGTMVVNVSGCFAIGLAMTLL), 66-86 (LALVVGFLGGYTTFSSFEWET), and 95-115 (FWIGLANVLGSVTLGYAAVWF). 2 residues coordinate Na(+): G74 and T77.

This sequence belongs to the fluoride channel Fluc/FEX (TC 1.A.43) family.

The protein resides in the cell inner membrane. The enzyme catalyses fluoride(in) = fluoride(out). Its activity is regulated as follows. Na(+) is not transported, but it plays an essential structural role and its presence is essential for fluoride channel function. Fluoride-specific ion channel. Important for reducing fluoride concentration in the cell, thus reducing its toxicity. In Solibacter usitatus (strain Ellin6076), this protein is Fluoride-specific ion channel FluC.